We begin with the raw amino-acid sequence, 217 residues long: Large ribosomal subunit protein uL4 (217 aa).

The interval 42–100 is disordered; it reads RAAARQGTHSTKTRGDVSGGGRKPYRQKGTGRARQGSTRAPQFTGGGVVHGPKPRDYSQ.

Belongs to the universal ribosomal protein uL4 family. Part of the 50S ribosomal subunit.

In terms of biological role, one of the primary rRNA binding proteins, this protein initially binds near the 5'-end of the 23S rRNA. It is important during the early stages of 50S assembly. It makes multiple contacts with different domains of the 23S rRNA in the assembled 50S subunit and ribosome. Forms part of the polypeptide exit tunnel. The polypeptide is Large ribosomal subunit protein uL4 (Mycobacterium avium (strain 104)).